A 229-amino-acid chain; its full sequence is Trypsin (229 aa).

The propeptide at 1–7 (APDDDDK) is activation peptide. The Peptidase S1 domain occupies 8–227 (IVGGYECPKH…YVSWIHETIA (220 aa)). Cystine bridges form between Cys-14/Cys-143, Cys-32/Cys-48, Cys-116/Cys-216, Cys-123/Cys-189, Cys-154/Cys-168, and Cys-179/Cys-203. His-47 serves as the catalytic Charge relay system. Glu-59 and Glu-69 together coordinate Ca(2+). Asp-91 acts as the Charge relay system in catalysis. The Charge relay system role is filled by Ser-183.

It belongs to the peptidase S1 family. Ca(2+) is required as a cofactor.

It is found in the secreted. The protein localises to the extracellular space. It catalyses the reaction Preferential cleavage: Arg-|-Xaa, Lys-|-Xaa.. In Squalus acanthias (Spiny dogfish), this protein is Trypsin.